Here is a 483-residue protein sequence, read N- to C-terminus: Glutathione reductase (483 aa).

N-acetylmethionine is present on methionine 1. Leucine 2 carries the N-acetylserine modification. Residues serine 33 and glycine 34 each coordinate FAD. Serine 33 is a glutathione binding site. Arginine 40 contributes to the glutathione binding site. Residues glutamate 53, threonine 60, cysteine 61, and lysine 69 each contribute to the FAD site. Residues cysteine 61 and cysteine 66 are joined by a disulfide bond. Tyrosine 123 contributes to the glutathione binding site. Alanine 139 is an FAD binding site. The NADP(+) site is built by alanine 205, isoleucine 208, glutamate 211, arginine 228, and arginine 234. Threonine 243 contributes to the glutathione binding site. Asparagine 278 carries N-linked (GlcNAc...) asparagine glycosylation. NADP(+) is bound at residue glycine 294. Residue aspartate 334 coordinates FAD. Glutamate 340 provides a ligand contact to NADP(+). Threonine 342 is a binding site for FAD. A glutathione-binding site is contributed by arginine 350. An NADP(+)-binding site is contributed by valine 375. Lysine 425 is a glutathione binding site. Residue histidine 472 coordinates FAD. The active-site Proton acceptor is histidine 472.

It belongs to the class-I pyridine nucleotide-disulfide oxidoreductase family. As to quaternary structure, homodimer. The cofactor is FAD.

It is found in the cytoplasm. It localises to the nucleus. Its subcellular location is the mitochondrion. The protein resides in the peroxisome. The enzyme catalyses 2 glutathione + NADP(+) = glutathione disulfide + NADPH + H(+). In terms of biological role, catalyzes the reduction of glutathione disulfide (GSSG) to reduced glutathione (GSH). Constitutes the major mechanism to maintain a high GSH:GSSG ratio in the cytosol. In Saccharomyces cerevisiae (strain ATCC 204508 / S288c) (Baker's yeast), this protein is Glutathione reductase.